The following is a 952-amino-acid chain: Protocadherin-20 (952 aa).

A signal peptide spans 1–60; it reads MRGRGNARSLLVQAVSLRPATWHPCLDMGHLHRPSSRTSHRNLPHVFLLFLFVGPFNCLA. Topologically, residues 61-891 are extracellular; it reads SYSRATELLY…VESMSCMPTL (831 aa). 6 Cadherin domains span residues 64 to 210, 211 to 321, 322 to 536, 537 to 640, 641 to 743, and 747 to 864; these read RATE…APQF, PISE…CPLF, IDSQ…APVF, LQPL…SPRF, INKD…PPLV, and QSNM…EPEI. N-linked (GlcNAc...) asparagine glycosylation is present at asparagine 135. N-linked (GlcNAc...) asparagine glycosylation is found at asparagine 327 and asparagine 333. 5 N-linked (GlcNAc...) asparagine glycosylation sites follow: asparagine 681, asparagine 749, asparagine 804, asparagine 845, and asparagine 850. The chain crosses the membrane as a helical span at residues 892-912; that stretch reads VALSVISLGSITLVTGMGIYI. Topologically, residues 913–952 are cytoplasmic; that stretch reads CLRKGKKHHREDDNLEVQIPLKGKIDLCMRERKPVDISNI.

The protein resides in the cell membrane. Its function is as follows. Potential calcium-dependent cell-adhesion protein. The sequence is that of Protocadherin-20 (Pcdh20) from Mus musculus (Mouse).